Consider the following 466-residue polypeptide: Magnetosome-associated protein MamJ (466 aa).

Disordered stretches follow at residues 1–23 (MAKN…ISTG) and 60–80 (ANQG…RSQD). A not required to restore magnetic response to deletion mutant region spans residues 1–24 (MAKNRRDRGTDLPGDGDQKISTGP). Positions 25 to 80 (EIVSVTVHPSPNLAAAAKPVQGDIWASLLESSPWSANQGGLVETAQPPSAPIRSQD) are required to restore magnetic response to deletion mutant. Tandem repeat unit repeat units lie at residues 81 to 168 (PVPV…VEPE) and 169 to 256 (PAPV…VEPE). Not required to restore magnetic response to deletion mutant stretches follow at residues 81–256 (PVPV…VEPE), 136–334 (ETDA…SQAE), 333–374 (AESV…AVEA), and 432–466 (VGSN…DKNK). 3 Glu-Pro-rich motif repeats span residues 145 to 164 (IEPE…EAAE), 233 to 252 (IEPE…EAAE), and 253 to 272 (VEPE…EAAE). Required to restore magnetic response to deletion mutant stretches follow at residues 375–432 (TRQP…GRLV) and 426–466 (VKGG…DKNK).

It belongs to the magnetosome MamJ protein family. Forms homooligomers. Interacts with MamK. In terms of processing, identified by N-terminal sequencing of a protein that is about 96 kDa in size. The protein runs anomalously on protein gels.

Its subcellular location is the magnetosome. Functionally, required for assembly of magnetosome chains. Regulates the dynamic behavior of MamK filaments. May connect magnetosomes to MamK filaments. Moves from the cell poles towards midcell; movement does not depend on the treadmilling ability of MamK, suggesting MamJ associates and disassociates continuously from the MamK filament. The polypeptide is Magnetosome-associated protein MamJ (Magnetospirillum gryphiswaldense (strain DSM 6361 / JCM 21280 / NBRC 15271 / MSR-1)).